A 1025-amino-acid chain; its full sequence is Multidrug resistance protein MdtC (1025 aa).

Transmembrane regions (helical) follow at residues 3-23 (FFALFIYRPVATILLSVAITL), 333-353 (EVEQTLIISVALVILVVFLFL), 360-380 (IIPAVAVPVSLIGTFAAMYLC), 387-407 (LSLMALTIATGFVVDDAIVVL), 431-451 (VGFTVLSMSLSLVAVFLPLLL), 463-483 (FAVTLSVAIGISLLVSLTLTP), 528-548 (LVGVVLLGTIALNIWLYISIP), 853-873 (VILIIAAIATVYIVLGILYES), 875-895 (VHPLTILSTLPSAGVGALLAL), 897-917 (LFNAPFSLIALIGIMLLIGIV), 953-973 (PIMMTTLAALFGALPLVLSGG), and 984-1004 (ITIVGGLVMSQLLTLYTTPVV).

This sequence belongs to the resistance-nodulation-cell division (RND) (TC 2.A.6) family. MdtC subfamily. Part of a tripartite efflux system composed of MdtA, MdtB and MdtC. MdtC forms a heteromultimer with MdtB.

It localises to the cell inner membrane. The MdtABC tripartite complex confers resistance against novobiocin and deoxycholate. The sequence is that of Multidrug resistance protein MdtC from Escherichia coli O1:K1 / APEC.